The sequence spans 313 residues: Homoserine O-succinyltransferase (313 aa).

Cys-142 serves as the catalytic Acyl-thioester intermediate. Substrate contacts are provided by Lys-163 and Ser-192. The active-site Proton acceptor is His-235. Residue Glu-237 is part of the active site. Substrate is bound at residue Arg-249.

This sequence belongs to the MetA family.

The protein localises to the cytoplasm. The catalysed reaction is L-homoserine + succinyl-CoA = O-succinyl-L-homoserine + CoA. The protein operates within amino-acid biosynthesis; L-methionine biosynthesis via de novo pathway; O-succinyl-L-homoserine from L-homoserine: step 1/1. Functionally, transfers a succinyl group from succinyl-CoA to L-homoserine, forming succinyl-L-homoserine. The protein is Homoserine O-succinyltransferase of Shewanella oneidensis (strain ATCC 700550 / JCM 31522 / CIP 106686 / LMG 19005 / NCIMB 14063 / MR-1).